Here is an 85-residue protein sequence, read N- to C-terminus: Probable Sec-independent protein translocase protein TatE (85 aa).

A helical transmembrane segment spans residues 1–21 (MEGLSITKLLVVGILIVLLFG). Positions 64-85 (KTVAETKAASDSQAAASVERKD) are disordered.

This sequence belongs to the TatA/E family. TatE subfamily.

It localises to the cell inner membrane. Functionally, part of the twin-arginine translocation (Tat) system that transports large folded proteins containing a characteristic twin-arginine motif in their signal peptide across membranes. TatE shares overlapping functions with TatA. The polypeptide is Probable Sec-independent protein translocase protein TatE (Yersinia pestis).